A 529-amino-acid chain; its full sequence is UDP-glucuronosyltransferase 2B23 (529 aa).

Positions 1-24 (MSVKWTSVILLIQLSFYFSSGSCG) are cleaved as a signal peptide. Residues N67 and N68 are each glycosylated (N-linked (GlcNAc...) asparagine). Residues 494–514 (IGFLLACVATVIFIIMKCCLF) traverse the membrane as a helical segment.

Belongs to the UDP-glycosyltransferase family. In terms of tissue distribution, expressed in several tissues, including the prostate, mammary gland, epididymis, testis and ovary.

It localises to the microsome membrane. Its subcellular location is the endoplasmic reticulum membrane. The enzyme catalyses glucuronate acceptor + UDP-alpha-D-glucuronate = acceptor beta-D-glucuronoside + UDP + H(+). In terms of biological role, UDPGTs are of major importance in the conjugation and subsequent elimination of potentially toxic xenobiotics and endogenous compounds. This isozyme has glucuronidating capacity on 6 steroids and the bile acid, hyodeoxycholic acid. May potentially play an important role in estrogen and androgen catabolism in peripheral steroid target tissues. The protein is UDP-glucuronosyltransferase 2B23 (UGT2B23) of Macaca fascicularis (Crab-eating macaque).